Consider the following 189-residue polypeptide: Potassium-transporting ATPase KdpC subunit (189 aa).

Residues 5-25 (LLPALTMLLVFTVITGIVYPL) traverse the membrane as a helical segment.

Belongs to the KdpC family. As to quaternary structure, the system is composed of three essential subunits: KdpA, KdpB and KdpC.

Its subcellular location is the cell membrane. Part of the high-affinity ATP-driven potassium transport (or Kdp) system, which catalyzes the hydrolysis of ATP coupled with the electrogenic transport of potassium into the cytoplasm. This subunit acts as a catalytic chaperone that increases the ATP-binding affinity of the ATP-hydrolyzing subunit KdpB by the formation of a transient KdpB/KdpC/ATP ternary complex. This is Potassium-transporting ATPase KdpC subunit from Mycobacterium bovis (strain ATCC BAA-935 / AF2122/97).